The chain runs to 273 residues: Putative pyruvate, phosphate dikinase regulatory protein (273 aa).

Residue 149-156 (GPSRTSKT) participates in ADP binding.

Belongs to the pyruvate, phosphate/water dikinase regulatory protein family. PDRP subfamily.

The catalysed reaction is N(tele)-phospho-L-histidyl/L-threonyl-[pyruvate, phosphate dikinase] + ADP = N(tele)-phospho-L-histidyl/O-phospho-L-threonyl-[pyruvate, phosphate dikinase] + AMP + H(+). It carries out the reaction N(tele)-phospho-L-histidyl/O-phospho-L-threonyl-[pyruvate, phosphate dikinase] + phosphate + H(+) = N(tele)-phospho-L-histidyl/L-threonyl-[pyruvate, phosphate dikinase] + diphosphate. Its function is as follows. Bifunctional serine/threonine kinase and phosphorylase involved in the regulation of the pyruvate, phosphate dikinase (PPDK) by catalyzing its phosphorylation/dephosphorylation. The protein is Putative pyruvate, phosphate dikinase regulatory protein of Rickettsia canadensis (strain McKiel).